A 326-amino-acid polypeptide reads, in one-letter code: Lipid droplet-associated hydrolase (326 aa).

The active-site Nucleophile is Ser-140. Active-site charge relay system residues include Asp-272 and His-301.

It belongs to the AB hydrolase superfamily. LDAH family. As to expression, expressed in liver, adrenal gland, prostate, spleen, kidney, brown and white adipose tissue, testis and to a lesser extent in brain (at protein level). Expressed in peritoneal macrophages and bone marrow-derived macrophages (at protein level). Highly expressed in macrophage and foam cell-rich areas in atherosclerotic lesions (at protein level). mRNA, but no protein, expressed in heart and muscle.

The protein localises to the lipid droplet. Its subcellular location is the endoplasmic reticulum. It carries out the reaction a cholesterol ester + H2O = cholesterol + a fatty acid + H(+). In terms of biological role, probable serine lipid hydrolase associated with lipid droplets. Has low cholesterol esterase activity. Appears to lack triglyceride lipase activity. Involved in cholesterol and triglyceride homeostasis; stimulates cellular triglyceride accumulation and cellular cholesterol release. Acts antagonistically with PNPLA2/ATGL in regulation of cellular lipid stores. May regulate triglyceride accumulation indirectly through stimulation of PNPLA2/ATGL ubiquitination and proteasomal degradation. Promotes microtubule-dependent lipid droplet fusion. Highly expressed in macrophage-rich areas in atherosclerotic lesions, suggesting that it could promote cholesterol ester turnover in macrophages. Its function is as follows. Stimulates cellular triglyceride accumulation and lipid droplet fusion. Associates with lipid droplets but does not stimulate cellular triglyceride accumulation, lipid droplet fusion or ATGL proteasomal degradation. This chain is Lipid droplet-associated hydrolase, found in Mus musculus (Mouse).